The primary structure comprises 138 residues: Large-conductance mechanosensitive channel (138 aa).

Helical transmembrane passes span valine 15–valine 35, isoleucine 38–glutamine 58, and glycine 80–valine 100.

This sequence belongs to the MscL family. As to quaternary structure, homopentamer.

It localises to the cell inner membrane. Functionally, channel that opens in response to stretch forces in the membrane lipid bilayer. May participate in the regulation of osmotic pressure changes within the cell. The sequence is that of Large-conductance mechanosensitive channel from Brucella ovis (strain ATCC 25840 / 63/290 / NCTC 10512).